A 472-amino-acid polypeptide reads, in one-letter code: Argininosuccinate lyase (472 aa).

The protein belongs to the lyase 1 family. Argininosuccinate lyase subfamily.

Its subcellular location is the cytoplasm. It catalyses the reaction 2-(N(omega)-L-arginino)succinate = fumarate + L-arginine. It functions in the pathway amino-acid biosynthesis; L-arginine biosynthesis; L-arginine from L-ornithine and carbamoyl phosphate: step 3/3. The chain is Argininosuccinate lyase from Syntrophus aciditrophicus (strain SB).